The chain runs to 156 residues: Probable chemoreceptor glutamine deamidase CheD (156 aa).

Belongs to the CheD family.

It carries out the reaction L-glutaminyl-[protein] + H2O = L-glutamyl-[protein] + NH4(+). Functionally, probably deamidates glutamine residues to glutamate on methyl-accepting chemotaxis receptors (MCPs), playing an important role in chemotaxis. The protein is Probable chemoreceptor glutamine deamidase CheD of Bdellovibrio bacteriovorus (strain ATCC 15356 / DSM 50701 / NCIMB 9529 / HD100).